Consider the following 297-residue polypeptide: Acetylglutamate kinase (297 aa).

Substrate contacts are provided by residues 72-73 (GG), R94, and N187.

This sequence belongs to the acetylglutamate kinase family. ArgB subfamily.

It localises to the cytoplasm. It carries out the reaction N-acetyl-L-glutamate + ATP = N-acetyl-L-glutamyl 5-phosphate + ADP. Its pathway is amino-acid biosynthesis; L-arginine biosynthesis; N(2)-acetyl-L-ornithine from L-glutamate: step 2/4. Its function is as follows. Catalyzes the ATP-dependent phosphorylation of N-acetyl-L-glutamate. In Synechocystis sp. (strain ATCC 27184 / PCC 6803 / Kazusa), this protein is Acetylglutamate kinase.